We begin with the raw amino-acid sequence, 683 residues long: Protein kinase C eta type (683 aa).

One can recognise a C2 domain in the interval 1–118 (MSSGTMKFNG…LRTAGTSDTF (118 aa)). Ser-28 and Ser-32 each carry phosphoserine. Phorbol-ester/DAG-type zinc fingers lie at residues 171-222 (GHKF…VTAC) and 245-295 (PHKF…APNC). The residue at position 317 (Ser-317) is a Phosphoserine. One can recognise a Protein kinase domain in the interval 355–614 (FEFIRVLGKG…EHEILRHPFF (260 aa)). Residues 361 to 369 (LGKGSFGKV) and Lys-384 each bind ATP. Asp-479 (proton acceptor) is an active-site residue. Residue Thr-513 is modified to Phosphothreonine; by PDPK1. The AGC-kinase C-terminal domain occupies 615-683 (KEIDWVQLNH…FSYVSPELQP (69 aa)). Thr-656 is subject to Phosphothreonine. A Phosphoserine modification is found at Ser-675.

The protein belongs to the protein kinase superfamily. AGC Ser/Thr protein kinase family. PKC subfamily. In terms of assembly, interacts with FYN. Interacts with RALA. Interacts with DGKQ.

Its subcellular location is the cytoplasm. The catalysed reaction is L-seryl-[protein] + ATP = O-phospho-L-seryl-[protein] + ADP + H(+). The enzyme catalyses L-threonyl-[protein] + ATP = O-phospho-L-threonyl-[protein] + ADP + H(+). Its activity is regulated as follows. Novel PKCs (PRKCD, PRKCE, PRKCH and PRKCQ) are calcium-insensitive, but activated by diacylglycerol (DAG) and phosphatidylserine. Three specific sites; Thr-513 (activation loop of the kinase domain), Thr-656 (turn motif) and Ser-675 (hydrophobic region), need to be phosphorylated for its full activation. In terms of biological role, calcium-independent, phospholipid- and diacylglycerol (DAG)-dependent serine/threonine-protein kinase that is involved in the regulation of cell differentiation in keratinocytes and pre-B cell receptor, mediates regulation of epithelial tight junction integrity and foam cell formation, and is required for glioblastoma proliferation and apoptosis prevention in MCF-7 cells. In keratinocytes, binds and activates the tyrosine kinase FYN, which in turn blocks epidermal growth factor receptor (EGFR) signaling and leads to keratinocyte growth arrest and differentiation. Associates with the cyclin CCNE1-CDK2-CDKN1B complex and inhibits CDK2 kinase activity, leading to RB1 dephosphorylation and thereby G1 arrest in keratinocytes. In association with RALA activates actin depolymerization, which is necessary for keratinocyte differentiation. In the pre-B cell receptor signaling, functions downstream of BLNK by up-regulating IRF4, which in turn activates L chain gene rearrangement. Regulates epithelial tight junctions (TJs) by phosphorylating occludin (OCLN) on threonine residues, which is necessary for the assembly and maintenance of TJs. In association with PLD2 and via TLR4 signaling, is involved in lipopolysaccharide (LPS)-induced RGS2 down-regulation and foam cell formation. Upon PMA stimulation, mediates glioblastoma cell proliferation by activating the mTOR pathway, the PI3K/AKT pathway and the ERK1-dependent phosphorylation of ELK1. Involved in the protection of glioblastoma cells from irradiation-induced apoptosis by preventing caspase-9 activation. In camptothecin-treated MCF-7 cells, regulates NF-kappa-B upstream signaling by activating IKBKB, and confers protection against DNA damage-induced apoptosis. Promotes oncogenic functions of ATF2 in the nucleus while blocking its apoptotic function at mitochondria. Phosphorylates ATF2 which promotes its nuclear retention and transcriptional activity and negatively regulates its mitochondrial localization. This is Protein kinase C eta type (Prkch) from Rattus norvegicus (Rat).